A 466-amino-acid chain; its full sequence is A-type ATP synthase subunit B (466 aa).

The protein belongs to the ATPase alpha/beta chains family. Has multiple subunits with at least A(3), B(3), C, D, E, F, H, I and proteolipid K(x).

It is found in the cell membrane. Component of the A-type ATP synthase that produces ATP from ADP in the presence of a proton gradient across the membrane. The B chain is a regulatory subunit. The chain is A-type ATP synthase subunit B from Sulfolobus acidocaldarius (strain ATCC 33909 / DSM 639 / JCM 8929 / NBRC 15157 / NCIMB 11770).